We begin with the raw amino-acid sequence, 901 residues long: HTH-type transcriptional regulator MalT (901 aa).

Residue 39–46 (SPAGYGKT) coordinates ATP. Residues 829–894 (ELIRTSPLTQ…DAVQHAQQLL (66 aa)) enclose the HTH luxR-type domain. Positions 853–872 (NEQIAGELAVAATTIKTHIR) form a DNA-binding region, H-T-H motif.

It belongs to the MalT family. In terms of assembly, monomer in solution. Oligomerizes to an active state in the presence of the positive effectors ATP and maltotriose.

Activated by ATP and maltotriose, which are both required for DNA binding. Its function is as follows. Positively regulates the transcription of the maltose regulon whose gene products are responsible for uptake and catabolism of malto-oligosaccharides. Specifically binds to the promoter region of its target genes, recognizing a short DNA motif called the MalT box. In Salmonella heidelberg (strain SL476), this protein is HTH-type transcriptional regulator MalT.